We begin with the raw amino-acid sequence, 124 residues long: Fluoride-specific ion channel FluC 2 (124 aa).

3 consecutive transmembrane segments (helical) span residues 36–56, 66–86, and 100–120; these read TFLI…YLAF, LFVM…SLDT, and LYAI…LALV. 2 residues coordinate Na(+): G74 and T77.

Belongs to the fluoride channel Fluc/FEX (TC 1.A.43) family.

It localises to the cell inner membrane. The enzyme catalyses fluoride(in) = fluoride(out). With respect to regulation, na(+) is not transported, but it plays an essential structural role and its presence is essential for fluoride channel function. Fluoride-specific ion channel. Important for reducing fluoride concentration in the cell, thus reducing its toxicity. This is Fluoride-specific ion channel FluC 2 from Nitrobacter hamburgensis (strain DSM 10229 / NCIMB 13809 / X14).